Here is a 600-residue protein sequence, read N- to C-terminus: ATP-dependent lipid A-core flippase (600 aa).

5 helical membrane passes run 28-48 (IMAV…IAFI), 80-100 (IMLM…VANF), 182-202 (WKLS…ISVV), 267-287 (ISQP…LYAA), and 295-315 (DLTA…LQPI). Positions 28-327 (IMAVLGLITY…LTRVNAEFQR (300 aa)) constitute an ABC transmembrane type-1 domain. Residues 359–596 (LAFDNVTFAY…AGIYANLYQM (238 aa)) form the ABC transporter domain. Residue 393–400 (GRSGSGKS) participates in ATP binding.

The protein belongs to the ABC transporter superfamily. Lipid exporter (TC 3.A.1.106) family. Homodimer.

Its subcellular location is the cell inner membrane. The catalysed reaction is ATP + H2O + lipid A-core oligosaccharideSide 1 = ADP + phosphate + lipid A-core oligosaccharideSide 2.. Its function is as follows. Involved in lipopolysaccharide (LPS) biosynthesis. Translocates lipid A-core from the inner to the outer leaflet of the inner membrane. Transmembrane domains (TMD) form a pore in the inner membrane and the ATP-binding domain (NBD) is responsible for energy generation. This Shewanella frigidimarina (strain NCIMB 400) protein is ATP-dependent lipid A-core flippase.